Reading from the N-terminus, the 185-residue chain is Photosystem I assembly protein Ycf4 (185 aa).

2 helical membrane passes run 24–44 and 66–86; these read YLIG…SISS and IIMG…WYLV.

The protein belongs to the Ycf4 family.

It localises to the cellular thylakoid membrane. In terms of biological role, seems to be required for the assembly of the photosystem I complex. The sequence is that of Photosystem I assembly protein Ycf4 from Prochlorococcus marinus (strain MIT 9515).